A 239-amino-acid chain; its full sequence is Diablo IAP-binding mitochondrial protein (239 aa).

The N-terminal 21 residues, 1–21 (MAALKSWLSRSVTSFFRYRQC), are a transit peptide targeting the mitochondrion. An IAP-binding motif is present at residues 56–60 (AVPIA). Residues 217-239 (RQKTQEEGEERAESEQEAYLRED) are disordered.

It belongs to the Smac/DIABLO protein family. As to quaternary structure, homodimer. Interacts with BIRC2/c-IAP1 (via BIR3 domain). Interacts with BIRC6/BRUCE; inhibits BIRC6 activity. Interacts with BIRC7/livin. Interacts with XIAP/BIRC4 (via BIR3 domain). Interacts with the monomeric and dimeric form of BIRC5/survivin. Interacts with AREL1 (via HECT domain); in the cytoplasm following induction of apoptosis. Interacts with BEX3. Ubiquitinated by BIRC7/livin. Ubiquitinated by BIRC6. Post-translationally, the precursor form is proteolytically cleaved by mitochondrial processing peptidase MPP to remove the transit peptide and produce an intermediate form. This is then processed by PARL to produce the mature cleaved form which is released from mitochondria into the cytosol in apoptotic cells. In terms of tissue distribution, ubiquitously expressed with highest expression in testis. Expression is also high in heart, liver, kidney, spleen, prostate and ovary. Low in brain, lung, thymus and peripheral blood leukocytes. Isoform 3 is ubiquitously expressed.

It is found in the mitochondrion. It localises to the cytoplasm. Its subcellular location is the cytosol. In terms of biological role, promotes apoptosis by activating caspases in the cytochrome c/Apaf-1/caspase-9 pathway. Acts by opposing the inhibitory activity of inhibitor of apoptosis proteins (IAP). Inhibits the activity of BIRC6/BRUCE by inhibiting its binding to caspases. Its function is as follows. Attenuates the stability and apoptosis-inhibiting activity of XIAP/BIRC4 by promoting XIAP/BIRC4 ubiquitination and degradation through the ubiquitin-proteasome pathway. Also disrupts XIAP/BIRC4 interacting with processed caspase-9 and promotes caspase-3 activation. Functionally, defective in the capacity to down-regulate the XIAP/BIRC4 abundance. The sequence is that of Diablo IAP-binding mitochondrial protein from Homo sapiens (Human).